The following is an 81-amino-acid chain: Acyl carrier protein (81 aa).

The Carrier domain maps to 4-79 (QEIFEKVQTI…QAVDFISQKV (76 aa)). At Ser39 the chain carries O-(pantetheine 4'-phosphoryl)serine.

Belongs to the acyl carrier protein (ACP) family. Post-translationally, 4'-phosphopantetheine is transferred from CoA to a specific serine of apo-ACP by AcpS. This modification is essential for activity because fatty acids are bound in thioester linkage to the sulfhydryl of the prosthetic group.

It localises to the plastid. Its subcellular location is the chloroplast. The protein operates within lipid metabolism; fatty acid biosynthesis. Functionally, carrier of the growing fatty acid chain in fatty acid biosynthesis. The sequence is that of Acyl carrier protein from Guillardia theta (Cryptophyte).